The sequence spans 228 residues: UPF0502 protein Rfer_1648 (228 aa).

Belongs to the UPF0502 family.

The sequence is that of UPF0502 protein Rfer_1648 from Albidiferax ferrireducens (strain ATCC BAA-621 / DSM 15236 / T118) (Rhodoferax ferrireducens).